The sequence spans 178 residues: Caveolin-1 (178 aa).

Serine 2 bears the N-acetylserine mark. Serine 2 bears the Phosphoserine mark. A required for homooligomerization region spans residues 2 to 94; that stretch reads SGGKYVDSEG…WKASFTTFTV (93 aa). The Cytoplasmic segment spans residues 2–104; it reads SGGKYVDSEG…TKYWFYRLLS (103 aa). At lysine 5 the chain carries N6-acetyllysine; alternate. Lysine 5 is covalently cross-linked (Glycyl lysine isopeptide (Lys-Gly) (interchain with G-Cter in ubiquitin); alternate). A Phosphotyrosine modification is found at tyrosine 6. Serine 9 is modified (phosphoserine). Phosphotyrosine; by ABL1 is present on tyrosine 14. The residue at position 25 (tyrosine 25) is a Phosphotyrosine. Residues lysine 26, lysine 30, lysine 39, lysine 47, and lysine 57 each participate in a glycyl lysine isopeptide (Lys-Gly) (interchain with G-Cter in ubiquitin) cross-link. Residues 82–94 are interaction with CAVIN3; that stretch reads DGIWKASFTTFTV. Residues 105–125 constitute an intramembrane region (helical); that stretch reads ALFGIPMALIWGIYFAILSFL. Topologically, residues 126 to 178 are cytoplasmic; that stretch reads HIWAVVPCIKSFLIEIQCISRVYSIYVHTFCDPLFEAIGKIFSNVRINLQKEI. Residues 131-142 are interacts with SPRY1, SPRY2, SPRY3 and SPRY4; that stretch reads VPCIKSFLIEIQ. S-palmitoyl cysteine attachment occurs at residues cysteine 133, cysteine 143, and cysteine 156. Residues 149–160 form an interacts with SPRY1, SPRY2, and SPRY4 region; it reads SIYVHTFCDPLF. The segment at 167–178 is interacts with SPRY1, SPRY2, SPRY3 and SPRY4; it reads FSNVRINLQKEI.

This sequence belongs to the caveolin family. As to quaternary structure, homooligomer. Interacts with GLIPR2. Interacts with NOSTRIN. Interacts with SNAP25 and STX1A. Interacts (via the N-terminus) with DPP4; the interaction is direct. Interacts with CTNNB1, CDH1 and JUP. Interacts with PACSIN2; this interaction induces membrane tubulation. Interacts with SLC7A9. Interacts with BMX and BTK. Interacts with TGFBR1. Interacts with CAVIN3 (via leucine-zipper domain) in a cholesterol-sensitive manner. Interacts with CAVIN1. Interacts with EHD2 in a cholesterol-dependent manner. Forms a ternary complex with UBXN6 and VCP; mediates CAV1 targeting to lysosomes for degradation. Interacts with ABCG1; this interaction regulates ABCG1-mediated cholesterol efflux. Interacts with NEU3; this interaction enhances NEU3 sialidase activity within caveola. Interacts (via C-terminus) with SPRY1, SPRY2 (via C-terminus), SPRY3, and SPRY4. Interacts with IGFBP5; this interaction allows trafficking of IGFBP5 from the plasma membrane to the nucleus. In terms of processing, phosphorylated at Tyr-14 by ABL1 in response to oxidative stress. Post-translationally, ubiquitinated. Undergo monoubiquitination and multi- and/or polyubiquitination. Monoubiquitination of N-terminal lysines promotes integration in a ternary complex with UBXN6 and VCP which promotes oligomeric CAV1 targeting to lysosomes for degradation. Ubiquitinated by ZNRF1; leading to degradation and modulation of the TLR4-mediated immune response.

It localises to the golgi apparatus membrane. Its subcellular location is the cell membrane. The protein localises to the membrane. The protein resides in the caveola. It is found in the membrane raft. Functionally, may act as a scaffolding protein within caveolar membranes. Forms a stable heterooligomeric complex with CAV2 that targets to lipid rafts and drives caveolae formation. Mediates the recruitment of CAVIN proteins (CAVIN1/2/3/4) to the caveolae. Interacts directly with G-protein alpha subunits and can functionally regulate their activity. Involved in the costimulatory signal essential for T-cell receptor (TCR)-mediated T-cell activation. Its binding to DPP4 induces T-cell proliferation and NF-kappa-B activation in a T-cell receptor/CD3-dependent manner. Recruits CTNNB1 to caveolar membranes and may regulate CTNNB1-mediated signaling through the Wnt pathway. Negatively regulates TGFB1-mediated activation of SMAD2/3 by mediating the internalization of TGFBR1 from membrane rafts leading to its subsequent degradation. Binds 20(S)-hydroxycholesterol (20(S)-OHC). This Equus caballus (Horse) protein is Caveolin-1 (CAV1).